Consider the following 25-residue polypeptide: Chitinolytic alpha-amylase inhibitor PvCAI (25 aa).

As to quaternary structure, homodimer.

The catalysed reaction is Random endo-hydrolysis of N-acetyl-beta-D-glucosaminide (1-&gt;4)-beta-linkages in chitin and chitodextrins.. Its function is as follows. Alpha-amylase inhibitor, active against Z.subfasciatus alpha-amylase (ZSA) but not porcine pancreatic alpha-amylase (PPA). Has chitinase activity. The chain is Chitinolytic alpha-amylase inhibitor PvCAI from Phaseolus vulgaris (Kidney bean).